The chain runs to 276 residues: L-aminoadipate-semialdehyde dehydrogenase-phosphopantetheinyl transferase (276 aa).

It belongs to the P-Pant transferase superfamily. AcpS family.

The enzyme catalyses apo-[ACP] + CoA = holo-[ACP] + adenosine 3',5'-bisphosphate + H(+). Functionally, catalyzes the transfer of a 4'-phosphopantetheine moiety from coenzyme A to a serine residue of acceptor proteins, such as alpha-aminoadipate reductase. Necessary for alpha-aminoadipate reductase activity. The polypeptide is L-aminoadipate-semialdehyde dehydrogenase-phosphopantetheinyl transferase (LYS5) (Eremothecium gossypii (strain ATCC 10895 / CBS 109.51 / FGSC 9923 / NRRL Y-1056) (Yeast)).